Reading from the N-terminus, the 401-residue chain is 8-amino-7-oxononanoate synthase (401 aa).

A substrate-binding site is contributed by Arg19. 106 to 107 (GY) is a binding site for pyridoxal 5'-phosphate. His131 is a binding site for substrate. Pyridoxal 5'-phosphate contacts are provided by Ser176, His204, and Thr233. The residue at position 236 (Lys236) is an N6-(pyridoxal phosphate)lysine. Residue Thr350 participates in substrate binding.

The protein belongs to the class-II pyridoxal-phosphate-dependent aminotransferase family. BioF subfamily. Homodimer. Pyridoxal 5'-phosphate serves as cofactor.

It carries out the reaction 6-carboxyhexanoyl-[ACP] + L-alanine + H(+) = (8S)-8-amino-7-oxononanoate + holo-[ACP] + CO2. The protein operates within cofactor biosynthesis; biotin biosynthesis. Functionally, catalyzes the decarboxylative condensation of pimeloyl-[acyl-carrier protein] and L-alanine to produce 8-amino-7-oxononanoate (AON), [acyl-carrier protein], and carbon dioxide. The sequence is that of 8-amino-7-oxononanoate synthase from Pseudomonas paraeruginosa (strain DSM 24068 / PA7) (Pseudomonas aeruginosa (strain PA7)).